Consider the following 1320-residue polypeptide: Tetratricopeptide repeat protein 21A (1320 aa).

TPR repeat units follow at residues 4–38 (NDSS…FSND), 110–143 (GTAL…SRGF), 146–180 (AYVL…TKDV), 181–213 (LGLM…SGSF), 215–247 (PALV…DESN), 334–367 (VHVA…DKDG), 502–534 (IDPL…DPAS), 572–605 (PLYH…PALK), 728–761 (PHTS…NPHD), 762–795 (ASLA…NGQD), 797–828 (LCCD…DIVQ), 837–869 (VKCL…QSRI), 889–922 (ASIC…LPTD), 924–956 (KVML…EQNH), 957–990 (ETAS…APDN), 1028–1061 (PGFN…STWG), 1201–1234 (EKSW…NKSC), 1236–1268 (KAYE…SHHA), and 1270–1303 (PAIG…HPDY).

It belongs to the TTC21 family. As to quaternary structure, interacts with IFT20. Interacts with IFT52. Interacts with IFT140. Interacts with CEP78; regulating IFT20 stability and localization. As to expression, strongly expressed in testis.

Its function is as follows. Intraflagellar transport (IFT)-associated protein required for spermatogenesis. Required for sperm flagellar formation and intraflagellar transport. This Homo sapiens (Human) protein is Tetratricopeptide repeat protein 21A.